The following is a 118-amino-acid chain: Large ribosomal subunit protein bL19 (118 aa).

The protein belongs to the bacterial ribosomal protein bL19 family.

This protein is located at the 30S-50S ribosomal subunit interface and may play a role in the structure and function of the aminoacyl-tRNA binding site. The chain is Large ribosomal subunit protein bL19 from Alcanivorax borkumensis (strain ATCC 700651 / DSM 11573 / NCIMB 13689 / SK2).